Here is a 149-residue protein sequence, read N- to C-terminus: Deoxyuridine 5'-triphosphate nucleotidohydrolase (149 aa).

Residues 68–70 (RSG), Asn81, 85–87 (LID), and Met95 contribute to the substrate site.

It belongs to the dUTPase family. Mg(2+) is required as a cofactor.

The enzyme catalyses dUTP + H2O = dUMP + diphosphate + H(+). It participates in pyrimidine metabolism; dUMP biosynthesis; dUMP from dCTP (dUTP route): step 2/2. Functionally, this enzyme is involved in nucleotide metabolism: it produces dUMP, the immediate precursor of thymidine nucleotides and it decreases the intracellular concentration of dUTP so that uracil cannot be incorporated into DNA. The chain is Deoxyuridine 5'-triphosphate nucleotidohydrolase from Albidiferax ferrireducens (strain ATCC BAA-621 / DSM 15236 / T118) (Rhodoferax ferrireducens).